The sequence spans 507 residues: ATP synthase subunit alpha, chloroplastic (507 aa).

Isoleucine 169 to lysine 176 provides a ligand contact to ATP.

It belongs to the ATPase alpha/beta chains family. As to quaternary structure, F-type ATPases have 2 components, CF(1) - the catalytic core - and CF(0) - the membrane proton channel. CF(1) has five subunits: alpha(3), beta(3), gamma(1), delta(1), epsilon(1). CF(0) has four main subunits: a, b, b' and c.

It localises to the plastid. The protein localises to the chloroplast thylakoid membrane. The catalysed reaction is ATP + H2O + 4 H(+)(in) = ADP + phosphate + 5 H(+)(out). In terms of biological role, produces ATP from ADP in the presence of a proton gradient across the membrane. The alpha chain is a regulatory subunit. In Saccharum hybrid (Sugarcane), this protein is ATP synthase subunit alpha, chloroplastic.